Consider the following 308-residue polypeptide: HTH-type transcriptional activator AllS (308 aa).

Positions 2–59 (FDPETLRTFIAVAETGSFSKAAERLCKTTATISYRIKLLEENTGVALFFRTTRSVTLT) constitute an HTH lysR-type domain. The H-T-H motif DNA-binding region spans 19 to 38 (FSKAAERLCKTTATISYRIK).

Belongs to the LysR transcriptional regulatory family.

Positive regulator essential for the expression of allD operon. Binds to the allD promoter. The chain is HTH-type transcriptional activator AllS (allS) from Escherichia coli O6:K15:H31 (strain 536 / UPEC).